Consider the following 742-residue polypeptide: Zinc finger protein 280C (742 aa).

Glycyl lysine isopeptide (Lys-Gly) (interchain with G-Cter in SUMO2) cross-links involve residues Lys-10, Lys-23, Lys-42, Lys-65, Lys-85, Lys-123, and Lys-135. Polar residues predominate over residues 138 to 168 (FTKTSPQEDSGACSVSQSDSTQDIPSSNILQ). Residues 138–243 (FTKTSPQEDS…QSAPGSSSLR (106 aa)) form a disordered region. Residues Lys-180, Lys-186, and Lys-193 each participate in a glycyl lysine isopeptide (Lys-Gly) (interchain with G-Cter in SUMO2) cross-link. The segment covering 182–191 (PSTSKVNSVN) has biased composition (polar residues). Positions 200–222 (SISETRPCSSSSSQTAPSGASSQ) are enriched in low complexity. Polar residues predominate over residues 223–243 (TVLSNVNTSSVQSAPGSSSLR). 5 consecutive C2H2-type zinc fingers follow at residues 323-345 (FKCFSCTKVLKNNIRFMNHMKHH), 360-383 (TTCQHCYRQYPNPFQLQCHIESTH), 390-413 (TICKICELSFETEHMLLQHMKDTH), 420-443 (YICQVCQFRSSIFSDVETHFRSSH), and 477-499 (YRCPKCRLQFLTSKEKTEHKLEH). Positions 523 to 578 (LGSSQSRASSPPSSTIPSTSLQLSVPKSKSTTTKNNSKVSANKATTTSPQTVATTT) are enriched in low complexity. The tract at residues 523–608 (LGSSQSRASS…YKQKRQRTRK (86 aa)) is disordered. The span at 579-592 (GKPSASKPGTGTTK) shows a compositional bias: polar residues. Lys-580 participates in a covalent cross-link: Glycyl lysine isopeptide (Lys-Gly) (interchain with G-Cter in SUMO2). The span at 593–608 (SKAKPSYKQKRQRTRK) shows a compositional bias: basic residues.

It localises to the nucleus. Its function is as follows. May function as a transcription factor. The protein is Zinc finger protein 280C (Znf280c) of Mus musculus (Mouse).